The following is a 635-amino-acid chain: Sodium-dependent multivitamin transporter (635 aa).

3 helical membrane-spanning segments follow: residues 24-44 (FSIM…AIGL), 68-88 (CLPV…ILGV), and 101-121 (FLGC…IPVF). The N-linked (GlcNAc...) asparagine glycan is linked to asparagine 138. The next 9 membrane-spanning stretches (helical) occupy residues 143–163 (VCGT…VLYA), 176–196 (LWLS…LGGL), 199–219 (VIWT…AVII), 256–276 (FWTL…VNQA), 297–317 (VFPF…VMFA), 336–356 (FVLY…GLFI), 396–416 (IMLS…MAYI), 428–448 (ISIF…GMFF), and 456–476 (AVVG…GSIV). 2 N-linked (GlcNAc...) asparagine glycosylation sites follow: asparagine 489 and asparagine 498. The helical transmembrane segment at 528 to 548 (LWYSAHNSTTVIVVGLIVSLL) threads the bilayer.

The protein belongs to the sodium:solute symporter (SSF) (TC 2.A.21) family. As to quaternary structure, interacts with PDZD11. May be glycosylated. As to expression, expressed in microvessels of the brain (at protein level). Expressed in heart, brain, placenta, lung, liver, skeletal muscle, kidney, and pancreas.

The protein resides in the cell membrane. It is found in the apical cell membrane. The catalysed reaction is biotin(out) + 2 Na(+)(out) = biotin(in) + 2 Na(+)(in). It carries out the reaction (R)-pantothenate(out) + 2 Na(+)(out) = (R)-pantothenate(in) + 2 Na(+)(in). It catalyses the reaction (R)-lipoate(out) + 2 Na(+)(out) = (R)-lipoate(in) + 2 Na(+)(in). The enzyme catalyses iodide(out) + 2 Na(+)(out) = iodide(in) + 2 Na(+)(in). Sodium-dependent multivitamin transporter that mediates the electrogenic transport of pantothenate, biotin, lipoate and iodide. Functions as a Na(+)-coupled substrate symporter where the stoichiometry of Na(+):substrate is 2:1, creating an electrochemical Na(+) gradient used as driving force for substrate uptake. Required for biotin and pantothenate uptake in the intestine across the brush border membrane. Plays a role in the maintenance of intestinal mucosa integrity, by providing the gut mucosa with biotin. Contributes to the luminal uptake of biotin and pantothenate into the brain across the blood-brain barrier. The sequence is that of Sodium-dependent multivitamin transporter from Homo sapiens (Human).